Here is a 720-residue protein sequence, read N- to C-terminus: Putative glutamine--fructose-6-phosphate aminotransferase [isomerizing] (720 aa).

The active-site Nucleophile; for GATase activity is the cysteine 2. A Glutamine amidotransferase type-2 domain is found at 2–321; that stretch reads CGIFGYCNFL…DNDTAHIYDG (320 aa). The segment covering 266–280 has biased composition (polar residues); that stretch reads STTSTFNHGSSTETP. Positions 266–285 are disordered; that stretch reads STTSTFNHGSSTETPAENGL. 2 consecutive SIS domains span residues 393-532 and 565-710; these read WLTE…DLVS and CDKK…VDLP.

It catalyses the reaction D-fructose 6-phosphate + L-glutamine = D-glucosamine 6-phosphate + L-glutamate. It functions in the pathway nucleotide-sugar biosynthesis; UDP-N-acetyl-alpha-D-glucosamine biosynthesis; alpha-D-glucosamine 6-phosphate from D-fructose 6-phosphate: step 1/1. In terms of biological role, involved in amino sugar synthesis (formation of chitin, supplies the amino sugars of asparagine-linked oligosaccharides of glycoproteins). The chain is Putative glutamine--fructose-6-phosphate aminotransferase [isomerizing] from Saccharomyces cerevisiae (strain JAY291) (Baker's yeast).